We begin with the raw amino-acid sequence, 311 residues long: Aspartate carbamoyltransferase catalytic subunit (311 aa).

Carbamoyl phosphate-binding residues include Arg55 and Thr56. Residue Lys85 coordinates L-aspartate. Carbamoyl phosphate contacts are provided by Arg106, His135, and Gln138. Residues Arg168 and Arg230 each coordinate L-aspartate. Carbamoyl phosphate contacts are provided by Leu268 and Pro269.

Belongs to the aspartate/ornithine carbamoyltransferase superfamily. ATCase family. Heterododecamer (2C3:3R2) of six catalytic PyrB chains organized as two trimers (C3), and six regulatory PyrI chains organized as three dimers (R2).

It carries out the reaction carbamoyl phosphate + L-aspartate = N-carbamoyl-L-aspartate + phosphate + H(+). Its pathway is pyrimidine metabolism; UMP biosynthesis via de novo pathway; (S)-dihydroorotate from bicarbonate: step 2/3. Functionally, catalyzes the condensation of carbamoyl phosphate and aspartate to form carbamoyl aspartate and inorganic phosphate, the committed step in the de novo pyrimidine nucleotide biosynthesis pathway. The sequence is that of Aspartate carbamoyltransferase catalytic subunit from Buchnera aphidicola subsp. Schizaphis graminum (strain Sg).